Reading from the N-terminus, the 363-residue chain is UDP-3-O-acylglucosamine N-acyltransferase (363 aa).

His-237 functions as the Proton acceptor in the catalytic mechanism. Residues 338-363 (EQNSTDRAPNAKMLEVGVDPETTCSS) form a disordered region.

Belongs to the transferase hexapeptide repeat family. LpxD subfamily. In terms of assembly, homotrimer.

It carries out the reaction a UDP-3-O-[(3R)-3-hydroxyacyl]-alpha-D-glucosamine + a (3R)-hydroxyacyl-[ACP] = a UDP-2-N,3-O-bis[(3R)-3-hydroxyacyl]-alpha-D-glucosamine + holo-[ACP] + H(+). The protein operates within bacterial outer membrane biogenesis; LPS lipid A biosynthesis. Catalyzes the N-acylation of UDP-3-O-acylglucosamine using 3-hydroxyacyl-ACP as the acyl donor. Is involved in the biosynthesis of lipid A, a phosphorylated glycolipid that anchors the lipopolysaccharide to the outer membrane of the cell. The chain is UDP-3-O-acylglucosamine N-acyltransferase from Synechococcus sp. (strain JA-2-3B'a(2-13)) (Cyanobacteria bacterium Yellowstone B-Prime).